The sequence spans 298 residues: MDLTGRRAVVTGGASGLGAETVRALAAAGAEVTVATRRPLSAEPLVQELAAAGGAGRVTAEALDLSDPASVESFARAWRGPLDILVANAGIMALPTRTLAPNGWEMQLATNYLGHFALATGLHAALRDAGSARIVVVSSGAHLDAPFDFEDAHFARRPYDPWVAYGQSKAADVLFTVGARRWAADGITVNALNPGYILTRLQRHVDDETMRAFGVMDDQGNVKPLPYYKTPEQGAATSVLLAASPLLKGVTGRYFEDNQEARTVQGQEDQPGGVAAHALDPEAADRLWEYGTDALRAA.

Position 9-33 (9-33 (VVTGGASGLGAETVRALAAAGAEVT)) interacts with NAD(+). Ser-139 is a binding site for substrate. The active-site Proton acceptor is Tyr-165.

The protein belongs to the short-chain dehydrogenases/reductases (SDR) family.

The sequence is that of Probable oxidoreductase from Streptomyces antibioticus.